Reading from the N-terminus, the 387-residue chain is F-box protein DOR (387 aa).

The region spanning 19–64 is the F-box domain; sequence DENFEPIPIDLVIEIFSRSPVKSIARCRCVSKLWASILRLPYFTEL.

Part of a SCF (ASK-cullin-F-box) protein ligase complex. Interacts with ASK14 and CUL1. Strongly expressed in guard cells. Mostly represented in seedlings, leaves and flowers, and, to a lower extent, in roots and siliques.

Its pathway is protein modification; protein ubiquitination. Functionally, component of SCF(ASK-cullin-F-box) E3 ubiquitin ligase complexes, which may mediate the ubiquitination and subsequent proteasomal degradation of target proteins. Negative regulator of guard cell abscisic acid (ABA) signaling, especially during drought stress. The polypeptide is F-box protein DOR (DOR) (Arabidopsis thaliana (Mouse-ear cress)).